The following is a 95-amino-acid chain: MLYTVGRSPYQCDFNVISKLLARGDDILFIQDGVLAGIEGNCYLSALISCGAALYALKEDIEARGLDDQVSDKVQVIDYTDFVNLTVKHHQQFAW.

This sequence belongs to the DsrH/TusB family. Heterohexamer, formed by a dimer of trimers. The hexameric TusBCD complex contains 2 copies each of TusB, TusC and TusD. The TusBCD complex interacts with TusE.

Its subcellular location is the cytoplasm. Its function is as follows. Part of a sulfur-relay system required for 2-thiolation of 5-methylaminomethyl-2-thiouridine (mnm(5)s(2)U) at tRNA wobble positions. The chain is Protein TusB from Photorhabdus laumondii subsp. laumondii (strain DSM 15139 / CIP 105565 / TT01) (Photorhabdus luminescens subsp. laumondii).